The chain runs to 414 residues: Probable sugar-binding periplasmic protein (414 aa).

Positions 1–22 (MRKFMTTTAVAALMLAATAARA) are cleaved as a signal peptide.

The protein belongs to the bacterial solute-binding protein 1 family.

It localises to the periplasm. In terms of biological role, part of a binding-protein-dependent transport system for a sugar. The sequence is that of Probable sugar-binding periplasmic protein from Rhizobium meliloti (strain 1021) (Ensifer meliloti).